Consider the following 252-residue polypeptide: MLAKRIIPCLDVKEGRVVKGVNFIGLQDVGDPVEIAALYNDAGADEIVFLDITATHEGRKTIIDVVEQTASKVFIPLTVGGGISSVKDMYNLLRAGADKVSINSAAVRNPKLIQEGAEHFGSQCIVVAIDARKVEEDKWNVYVNGGRVDTGMDAIEWAKRVVKLGAGEILLTSMDADGTKNGYDLRLTGAISNSVSVPVIASGGCGHVDHIIEVFQKTTVDAALAASIFHYGEATVQDVKRKLREANVEVRL.

Residues Asp11 and Asp130 contribute to the active site.

The protein belongs to the HisA/HisF family. As to quaternary structure, heterodimer of HisH and HisF.

It localises to the cytoplasm. The enzyme catalyses 5-[(5-phospho-1-deoxy-D-ribulos-1-ylimino)methylamino]-1-(5-phospho-beta-D-ribosyl)imidazole-4-carboxamide + L-glutamine = D-erythro-1-(imidazol-4-yl)glycerol 3-phosphate + 5-amino-1-(5-phospho-beta-D-ribosyl)imidazole-4-carboxamide + L-glutamate + H(+). Its pathway is amino-acid biosynthesis; L-histidine biosynthesis; L-histidine from 5-phospho-alpha-D-ribose 1-diphosphate: step 5/9. Its function is as follows. IGPS catalyzes the conversion of PRFAR and glutamine to IGP, AICAR and glutamate. The HisF subunit catalyzes the cyclization activity that produces IGP and AICAR from PRFAR using the ammonia provided by the HisH subunit. This is Imidazole glycerol phosphate synthase subunit HisF from Bacillus mycoides (strain KBAB4) (Bacillus weihenstephanensis).